Consider the following 58-residue polypeptide: Probable ferredoxin (58 aa).

4Fe-4S ferredoxin-type domains are found at residues 2-30 (VAKV…LNDD) and 31-58 (GIAT…ITIE). Residues Cys10, Cys13, Cys16, Cys20, Cys40, Cys43, Cys46, and Cys50 each coordinate [4Fe-4S] cluster.

Requires [4Fe-4S] cluster as cofactor.

Functionally, ferredoxins are iron-sulfur proteins that transfer electrons in a wide variety of metabolic reactions. The chain is Probable ferredoxin from Methanosarcina thermophila.